We begin with the raw amino-acid sequence, 327 residues long: Phenylalanine--tRNA ligase alpha subunit (327 aa).

A Mg(2+)-binding site is contributed by E252.

It belongs to the class-II aminoacyl-tRNA synthetase family. Phe-tRNA synthetase alpha subunit type 1 subfamily. Tetramer of two alpha and two beta subunits. Mg(2+) serves as cofactor.

Its subcellular location is the cytoplasm. The enzyme catalyses tRNA(Phe) + L-phenylalanine + ATP = L-phenylalanyl-tRNA(Phe) + AMP + diphosphate + H(+). This is Phenylalanine--tRNA ligase alpha subunit from Photorhabdus laumondii subsp. laumondii (strain DSM 15139 / CIP 105565 / TT01) (Photorhabdus luminescens subsp. laumondii).